Consider the following 228-residue polypeptide: Secreted LysM effector ECP6 (228 aa).

Positions 1-18 (MQSMILFAAALMGAAVNG) are cleaved as a signal peptide. Disulfide bonds link Cys-36-Cys-90, Cys-64-Cys-98, Cys-109-Cys-163, and Cys-168-Cys-220. Residues 42–86 (IKYTVVKGDTLTSIAKKFKSGICNIVSVNKLANPNLIELGATLII) enclose the LysM 1 domain. Positions 51, 53, 76, and 78 each coordinate chitin. 4 N-linked (GlcNAc...) asparagine glycosylation sites follow: Asn-89, Asn-95, Asn-127, and Asn-133. 2 LysM domains span residues 115 to 160 (GSYT…IITV) and 172 to 216 (GTYN…QIIL). Chitin-binding residues include Gly-179, Leu-181, Val-183, Pro-205, Ser-206, and Leu-208. Residue Asn-222 is glycosylated (N-linked (GlcNAc...) asparagine).

The protein belongs to the secreted LysM effector family. As to quaternary structure, forms homodimers.

The protein resides in the secreted. Secreted effector that enables the plant pathogenic fungus to manipulate host defenses for successful infection. Binds chitine, but not to any other glycan, including the N-linked glycan chitobiose. Outcompetes host immune receptor for chitin binding through intrachain LysM dimerization. During infection, sequesters chitin oligosaccharides that are released from the cell walls of invading hyphae to prevent elicitation of host immunity. The polypeptide is Secreted LysM effector ECP6 (Passalora fulva (Tomato leaf mold)).